The sequence spans 557 residues: Dihydroxy-acid dehydratase (557 aa).

Cys49 contributes to the [2Fe-2S] cluster binding site. Asp81 lines the Mg(2+) pocket. Cys122 contacts [2Fe-2S] cluster. Positions 123 and 124 each coordinate Mg(2+). Lys124 is subject to N6-carboxylysine. Cys194 contacts [2Fe-2S] cluster. Residue Glu446 coordinates Mg(2+). The Proton acceptor role is filled by Ser472.

Belongs to the IlvD/Edd family. As to quaternary structure, homodimer. [2Fe-2S] cluster is required as a cofactor. Mg(2+) serves as cofactor.

It catalyses the reaction (2R)-2,3-dihydroxy-3-methylbutanoate = 3-methyl-2-oxobutanoate + H2O. The catalysed reaction is (2R,3R)-2,3-dihydroxy-3-methylpentanoate = (S)-3-methyl-2-oxopentanoate + H2O. It functions in the pathway amino-acid biosynthesis; L-isoleucine biosynthesis; L-isoleucine from 2-oxobutanoate: step 3/4. It participates in amino-acid biosynthesis; L-valine biosynthesis; L-valine from pyruvate: step 3/4. Its function is as follows. Functions in the biosynthesis of branched-chain amino acids. Catalyzes the dehydration of (2R,3R)-2,3-dihydroxy-3-methylpentanoate (2,3-dihydroxy-3-methylvalerate) into 2-oxo-3-methylpentanoate (2-oxo-3-methylvalerate) and of (2R)-2,3-dihydroxy-3-methylbutanoate (2,3-dihydroxyisovalerate) into 2-oxo-3-methylbutanoate (2-oxoisovalerate), the penultimate precursor to L-isoleucine and L-valine, respectively. In Prochlorococcus marinus (strain MIT 9301), this protein is Dihydroxy-acid dehydratase.